We begin with the raw amino-acid sequence, 285 residues long: RNase adapter protein RapZ (285 aa).

Residue 8 to 15 (GRSGSGKS) participates in ATP binding. 56–59 (DVRN) serves as a coordination point for GTP. Residues 266 to 285 (RSRGKNVQSRHRTLEKRKPS) form an RNA-binding region.

It belongs to the RapZ-like family. RapZ subfamily. In terms of assembly, homotrimer.

Functionally, modulates the synthesis of GlmS, by affecting the processing and stability of the regulatory small RNA GlmZ. When glucosamine-6-phosphate (GlcN6P) concentrations are high in the cell, RapZ binds GlmZ and targets it to cleavage by RNase E. Consequently, GlmZ is inactivated and unable to activate GlmS synthesis. Under low GlcN6P concentrations, RapZ is sequestered and inactivated by an other regulatory small RNA, GlmY, preventing GlmZ degradation and leading to synthesis of GlmS. The chain is RNase adapter protein RapZ from Pectobacterium atrosepticum (strain SCRI 1043 / ATCC BAA-672) (Erwinia carotovora subsp. atroseptica).